A 194-amino-acid chain; its full sequence is Cathelicidin-related peptide isoform 3 (194 aa).

An N-terminal signal peptide occupies residues 1–22 (MQGFFWKTWLVLAVCGTPASLA). A propeptide spanning residues 23 to 164 (HRPLSYGEAL…DQPKRVKRFK (142 aa)) is cleaved from the precursor. Intrachain disulfides connect C79/C90 and C101/C118. Positions 125–145 (EEEEEEEEEEQKAEAENDEEV) are enriched in acidic residues. Positions 125–156 (EEEEEEEEEEQKAEAENDEEVEKEKGDEEKDQ) are disordered. Residues 146–156 (EKEKGDEEKDQ) show a composition bias toward basic and acidic residues.

This sequence belongs to the cathelicidin family. In terms of tissue distribution, expressed by the venom gland.

The protein resides in the secreted. The protein localises to the target cell membrane. Potent antimicrobial peptide against Gram-negative and Gram-positive bacteria. Adopts an amphipathic alpha helical conformation, that may allow to partition into the target membrane. Low hemolytic activities have been observed on mammalian cells. The polypeptide is Cathelicidin-related peptide isoform 3 (Crotalus durissus cascavella (Northeastern Brazilian rattlesnake)).